The following is a 241-amino-acid chain: Adapter protein MecA (241 aa).

The disordered stretch occupies residues 115–141; sequence TDSNDKNNDDSSYMSDGNPADLNGYAN.

Belongs to the MecA family. Homodimer.

Functionally, enables the recognition and targeting of unfolded and aggregated proteins to the ClpC protease or to other proteins involved in proteolysis. This Pediococcus pentosaceus (strain ATCC 25745 / CCUG 21536 / LMG 10740 / 183-1w) protein is Adapter protein MecA.